Here is a 279-residue protein sequence, read N- to C-terminus: Tryptophan synthase alpha chain (279 aa).

Catalysis depends on proton acceptor residues Glu50 and Asp61.

This sequence belongs to the TrpA family. As to quaternary structure, tetramer of two alpha and two beta chains.

The catalysed reaction is (1S,2R)-1-C-(indol-3-yl)glycerol 3-phosphate + L-serine = D-glyceraldehyde 3-phosphate + L-tryptophan + H2O. The protein operates within amino-acid biosynthesis; L-tryptophan biosynthesis; L-tryptophan from chorismate: step 5/5. The alpha subunit is responsible for the aldol cleavage of indoleglycerol phosphate to indole and glyceraldehyde 3-phosphate. This is Tryptophan synthase alpha chain from Sinorhizobium medicae (strain WSM419) (Ensifer medicae).